A 213-amino-acid polypeptide reads, in one-letter code: Non-structural protein NP-1 (213 aa).

Residues Met-1 to Lys-80 are disordered. Composition is skewed to basic and acidic residues over residues Ser-15–Arg-33 and Ala-43–Asn-58.

The protein belongs to the Bocaparvovirus Non-structural protein NP-1 family.

Its subcellular location is the host nucleus. In terms of biological role, required for the expression of the capsid proteins. Performs the splicing and internal polyadenylation of the viral capsid-encoding mRNA precursor, which allows its maturation and expression. Transactivates the viral promoter. This chain is Non-structural protein NP-1 (NP1), found in Bos taurus (Bovine).